The primary structure comprises 127 residues: Fluoride-specific ion channel FluC (127 aa).

4 consecutive transmembrane segments (helical) span residues 4–24, 35–55, 71–91, and 103–123; these read LLLAVFIGGGTGSVARWMLSM, IGTLTANLLGAFIIGMGFAWF, TGFCGGLTTFSTFSAEVVFLL, and VLINLLGSFAMTALAFWLFSA. The Na(+) site is built by Gly75 and Thr78.

This sequence belongs to the fluoride channel Fluc/FEX (TC 1.A.43) family.

It is found in the cell inner membrane. The enzyme catalyses fluoride(in) = fluoride(out). Its activity is regulated as follows. Na(+) is not transported, but it plays an essential structural role and its presence is essential for fluoride channel function. In terms of biological role, fluoride-specific ion channel. Important for reducing fluoride concentration in the cell, thus reducing its toxicity. The protein is Fluoride-specific ion channel FluC of Salmonella agona (strain SL483).